The following is a 327-amino-acid chain: GMP reductase (327 aa).

C175 acts as the Thioimidate intermediate in catalysis. 204–227 is an NADP(+) binding site; the sequence is IIADGGIRTHGDIAKSIRFGASMV.

The protein belongs to the IMPDH/GMPR family. GuaC type 2 subfamily.

It catalyses the reaction IMP + NH4(+) + NADP(+) = GMP + NADPH + 2 H(+). Functionally, catalyzes the irreversible NADPH-dependent deamination of GMP to IMP. It functions in the conversion of nucleobase, nucleoside and nucleotide derivatives of G to A nucleotides, and in maintaining the intracellular balance of A and G nucleotides. The sequence is that of GMP reductase from Exiguobacterium sp. (strain ATCC BAA-1283 / AT1b).